We begin with the raw amino-acid sequence, 435 residues long: Putative acid phosphatase F26C11.1 (435 aa).

His38 functions as the Nucleophile in the catalytic mechanism. Asp317 acts as the Proton donor in catalysis. Cys382 and Cys388 are joined by a disulfide.

It belongs to the histidine acid phosphatase family.

It catalyses the reaction a phosphate monoester + H2O = an alcohol + phosphate. The polypeptide is Putative acid phosphatase F26C11.1 (Caenorhabditis elegans).